Consider the following 132-residue polypeptide: Phosphoribosyl-AMP cyclohydrolase (132 aa).

Aspartate 86 lines the Mg(2+) pocket. Cysteine 87 contacts Zn(2+). Mg(2+)-binding residues include aspartate 88 and aspartate 90. Positions 103 and 110 each coordinate Zn(2+).

It belongs to the PRA-CH family. Homodimer. Mg(2+) serves as cofactor. Zn(2+) is required as a cofactor.

It is found in the cytoplasm. It catalyses the reaction 1-(5-phospho-beta-D-ribosyl)-5'-AMP + H2O = 1-(5-phospho-beta-D-ribosyl)-5-[(5-phospho-beta-D-ribosylamino)methylideneamino]imidazole-4-carboxamide. Its pathway is amino-acid biosynthesis; L-histidine biosynthesis; L-histidine from 5-phospho-alpha-D-ribose 1-diphosphate: step 3/9. Its function is as follows. Catalyzes the hydrolysis of the adenine ring of phosphoribosyl-AMP. The sequence is that of Phosphoribosyl-AMP cyclohydrolase from Clavibacter michiganensis subsp. michiganensis (strain NCPPB 382).